The chain runs to 302 residues: Sulfate adenylyltransferase subunit 2 (302 aa).

It belongs to the PAPS reductase family. CysD subfamily. As to quaternary structure, heterodimer composed of CysD, the smaller subunit, and CysN.

It catalyses the reaction sulfate + ATP + H(+) = adenosine 5'-phosphosulfate + diphosphate. It functions in the pathway sulfur metabolism; hydrogen sulfide biosynthesis; sulfite from sulfate: step 1/3. Functionally, with CysN forms the ATP sulfurylase (ATPS) that catalyzes the adenylation of sulfate producing adenosine 5'-phosphosulfate (APS) and diphosphate, the first enzymatic step in sulfur assimilation pathway. APS synthesis involves the formation of a high-energy phosphoric-sulfuric acid anhydride bond driven by GTP hydrolysis by CysN coupled to ATP hydrolysis by CysD. This chain is Sulfate adenylyltransferase subunit 2, found in Xanthomonas axonopodis pv. citri (strain 306).